The primary structure comprises 314 residues: DNA-directed RNA polymerase subunit alpha (314 aa).

The segment at 1-228 is alpha N-terminal domain (alpha-NTD); it reads MIEFEKPNIH…EHLAMFVDLT (228 aa). The alpha C-terminal domain (alpha-CTD) stretch occupies residues 245–314; that stretch reads KEKMLEMTIE…DLGVSFRQDD (70 aa).

Belongs to the RNA polymerase alpha chain family. As to quaternary structure, homodimer. The RNAP catalytic core consists of 2 alpha, 1 beta, 1 beta' and 1 omega subunit. When a sigma factor is associated with the core the holoenzyme is formed, which can initiate transcription.

It catalyses the reaction RNA(n) + a ribonucleoside 5'-triphosphate = RNA(n+1) + diphosphate. Its function is as follows. DNA-dependent RNA polymerase catalyzes the transcription of DNA into RNA using the four ribonucleoside triphosphates as substrates. The polypeptide is DNA-directed RNA polymerase subunit alpha (Limosilactobacillus reuteri (strain DSM 20016) (Lactobacillus reuteri)).